A 299-amino-acid chain; its full sequence is Taste receptor type 2 member 1 (299 aa).

The Extracellular segment spans residues 1–9 (MLESHLIIY). Residues 10–30 (FLLAVIQFLLGIFTNGIIVVV) traverse the membrane as a helical segment. Residues 31–55 (NGIDLIKHRKMAPLDLLLSCLAVSR) lie on the Cytoplasmic side of the membrane. Residues 56–76 (IFLQLFIFYVNVIVIFFIEFI) traverse the membrane as a helical segment. The Extracellular portion of the chain corresponds to 77 to 81 (MCSAN). Residues 82–102 (CAILLFINELELWLATWLGVF) form a helical membrane-spanning segment. Residues 103-124 (YCAKVASVRHPLFXWLKMRISK) are Cytoplasmic-facing. A helical membrane pass occupies residues 125–145 (LVPWMILGSLLYVSMICVFHS). Topologically, residues 146-178 (KYAGFMVPYFLRNFFSQNTTIQKEDTLAIQIFS) are extracellular. N-linked (GlcNAc...) asparagine glycosylation is present at asparagine 163. Residues 179-199 (FVAEFSVPLLIFLVAVLLLIF) form a helical membrane-spanning segment. Residues 200-222 (SLGRHTRQMRNTVAGSRVPGRGA) are Cytoplasmic-facing. The chain crosses the membrane as a helical span at residues 223–243 (PISALLSILSFLILYFSHCMI). The Extracellular portion of the chain corresponds to 244–257 (KVFLSSLKFHIRRF). Residues 258–278 (IFLFFILVIGIYPSGHSLILI) traverse the membrane as a helical segment. The Cytoplasmic portion of the chain corresponds to 279 to 299 (LGNPKLKQNAKKFLLHSKCCQ).

Belongs to the G-protein coupled receptor T2R family.

It localises to the membrane. Functionally, receptor that may play a role in the perception of bitterness and is gustducin-linked. May play a role in sensing the chemical composition of the gastrointestinal content. The activity of this receptor may stimulate alpha gustducin, mediate PLC-beta-2 activation and lead to the gating of TRPM5. The sequence is that of Taste receptor type 2 member 1 (TAS2R1) from Gorilla gorilla gorilla (Western lowland gorilla).